A 389-amino-acid polypeptide reads, in one-letter code: Aspartic protease pepA (389 aa).

The signal sequence occupies residues 1-20; the sequence is MVLINQLGAVLAVCATLTVA. The propeptide at 21-67 is activation peptide; it reads APTKGKARFNVPQVAIPKKMVHHPAVSYARALHKFGMKVPKTVQDAA. One can recognise a Peptidase A1 domain in the interval 82-386; sequence YVTQVTVGEG…DTQGPRIGFA (305 aa). Aspartate 98 is a catalytic residue. Residue asparagine 257 is glycosylated (N-linked (GlcNAc...) asparagine). Aspartate 279 is an active-site residue. Residues cysteine 315 and cysteine 348 are joined by a disulfide bond.

It belongs to the peptidase A1 family. Monomer.

It is found in the secreted. Its function is as follows. Secreted aspartic endopeptidase that allows assimilation of proteinaceous substrates. The scissile peptide bond is attacked by a nucleophilic water molecule activated by two aspartic residues in the active site. Shows a broad primary substrate specificity. Favors hydrophobic residues at the P1 and P1' positions. This is Aspartic protease pepA from Arthroderma otae (strain ATCC MYA-4605 / CBS 113480) (Microsporum canis).